The following is a 137-amino-acid chain: MPVIQWSEALHLGDAATDANHAAFCTLLNAVADASEADFVSALDAFIAHTEVHFAEENAWMEAADFPPLHCHRNEHDNVLALCREVRRRAADGDMALGRRLVTELPEWFAQHVDVMDRMMTTWLAQRGPDAREEAAA.

Residues H21, H53, E57, H72, H76, H112, and D117 each coordinate Fe cation.

Belongs to the hemerythrin family. In terms of assembly, monomer.

Functionally, oxygen-binding protein. May be involved in a storage mechanism or for delivery to oxygen-requiring enzymes. The oxygen-binding site contains two iron atoms. The polypeptide is Bacteriohemerythrin (Ralstonia nicotianae (strain ATCC BAA-1114 / GMI1000) (Ralstonia solanacearum)).